Consider the following 938-residue polypeptide: Microperfuranone synthase (938 aa).

Residues 44 to 445 form an adenylation (A) domain region; it reads TSTRISYAEL…AGRTKDTIIV (402 aa). The region spanning 579–655 is the Carrier domain; it reads SDSERAVQKA…AIARSIDSSR (77 aa). Residues 581–652 are thiolation and peptide carrier (T) domain; it reads SERAVQKALV…TPGAIARSID (72 aa). At Ser613 the chain carries O-(pantetheine 4'-phosphoryl)serine. Positions 676–923 are thioesterase (TE) domain; the sequence is PLFCIHPGSG…AKMLNREHIA (248 aa). The active site involves Ser746.

This sequence belongs to the ATP-dependent AMP-binding enzyme family.

Its pathway is secondary metabolite biosynthesis. Microperfuranone synthase is the only protein required for the biosynthesis of the secondary metabolite microperfuranone from phenylpyruvic acid (PPA). Several steps for the microperfuranione biosynthesis have been proposed. These steps include the activation of PPA, by the micA adenylation (A) domain to AMP-phenylpyruvic acid followed by loading of the PPA unit to the thiolation and peptide carrier (T) domain and eventually transferring to the thioesterase (TE) domain. After loading another PPA unit onto the T domain, aldol condensation establishes the carbon-carbon bond between the alpha- and beta-carbon of the two PPA units. Sulfur-assisted furan ring formation, TE domain mediated hydrolysis, decarboxylation, and keto-enol tautomerization would generate microperfuranone attached to the T domain. Finally, microperfuranone is released by the TE domain. This chain is Microperfuranone synthase, found in Emericella nidulans (strain FGSC A4 / ATCC 38163 / CBS 112.46 / NRRL 194 / M139) (Aspergillus nidulans).